Consider the following 73-residue polypeptide: Conotoxin Vc6.17 (73 aa).

The first 19 residues, 1–19 (MQKLIILLLVAAVLMSTQA), serve as a signal peptide directing secretion. The propeptide occupies 20 to 44 (LFQEKRRKEKIDLLSKRKTDAEKQH). Cystine bridges form between Cys-48–Cys-62, Cys-55–Cys-66, and Cys-61–Cys-71.

It belongs to the conotoxin O2 superfamily. In terms of tissue distribution, expressed by the venom duct.

The protein localises to the secreted. In terms of biological role, inhibits voltage-gated ion channels. This chain is Conotoxin Vc6.17, found in Conus victoriae (Queen Victoria cone).